Reading from the N-terminus, the 271-residue chain is Probable WRKY transcription factor 69 (271 aa).

Disordered regions lie at residues 1-47 and 130-166; these read MHRR…NVEK and PSSS…TVTA. Positions 9–18 are enriched in acidic residues; it reads ESDDEEDETY. The segment at residues 64–130 is a DNA-binding region (WRKY); sequence GEVYPPSDSW…YACDHNHPFP (67 aa).

The protein belongs to the WRKY group II-e family.

The protein localises to the nucleus. In terms of biological role, transcription factor. Interacts specifically with the W box (5'-(T)TGAC[CT]-3'), a frequently occurring elicitor-responsive cis-acting element. This Arabidopsis thaliana (Mouse-ear cress) protein is Probable WRKY transcription factor 69 (WRKY69).